A 130-amino-acid chain; its full sequence is C-C motif chemokine 28 (130 aa).

An N-terminal signal peptide occupies residues 1–16 (MQQAGLTLMAVAVCVA). 2 cysteine pairs are disulfide-bonded: C30–C58 and C31–C73. N78 carries N-linked (GlcNAc...) asparagine glycosylation. The tract at residues 92–130 (KNGRENVCSGKKQPSRKDRKGHTTRKHRTRGTHRHEASR) is disordered. A compositionally biased stretch (basic residues) spans 104 to 124 (QPSRKDRKGHTTRKHRTRGTH).

It belongs to the intercrine beta (chemokine CC) family. In terms of tissue distribution, mainly expressed in testis, epithelial cells of normal colon, kidney, Peyer patches, lymph nodes. Also found in lower levels in brain, spleen and lung.

It is found in the secreted. Chemotactic for resting CD4, CD8 T-cells and eosinophils. Binds to CCR10 and induces calcium mobilization in a dose-dependent manner. The polypeptide is C-C motif chemokine 28 (Ccl28) (Mus musculus (Mouse)).